We begin with the raw amino-acid sequence, 472 residues long: Sporozoite surface protein P36p (472 aa).

Residues 1–23 form the signal peptide; the sequence is MMKRRRIFMYYCFCFLLKYVAFS. Residues asparagine 24, asparagine 29, asparagine 93, asparagine 112, and asparagine 185 are each glycosylated (N-linked (GlcNAc...) asparagine). 6-Cys domains are found at residues 24 to 157 and 160 to 299; these read NVTN…FKKM and KIKG…TSKN. 5 disulfides stabilise this stretch: cysteine 64-cysteine 138, cysteine 81-cysteine 136, cysteine 164-cysteine 188, cysteine 202-cysteine 281, and cysteine 222-cysteine 279. Asparagine 295, asparagine 306, asparagine 383, asparagine 396, asparagine 400, and asparagine 416 each carry an N-linked (GlcNAc...) asparagine glycan. The interval 359 to 385 is disordered; that stretch reads KMDPSDEDESNENAHNGNRANKDANYS. Residue serine 449 is the site of GPI-anchor amidated serine attachment. The propeptide at 450-472 is removed in mature form; sequence SSYYEVFNYFSIAFILIIHMLLW.

The protein localises to the cell surface. It localises to the cell membrane. Its function is as follows. Involved in sporozoite infection of hepatocytes and replication therein. This Plasmodium berghei (strain Anka) protein is Sporozoite surface protein P36p (P52).